The following is a 215-amino-acid chain: Imidazole glycerol phosphate synthase subunit HisH (215 aa).

Positions 9–215 (EVVLVDYGLG…QNFVDYCLER (207 aa)) constitute a Glutamine amidotransferase type-1 domain. The active-site Nucleophile is C85. Residues H193 and E195 contribute to the active site.

Heterodimer of HisH and HisF.

It is found in the cytoplasm. It catalyses the reaction 5-[(5-phospho-1-deoxy-D-ribulos-1-ylimino)methylamino]-1-(5-phospho-beta-D-ribosyl)imidazole-4-carboxamide + L-glutamine = D-erythro-1-(imidazol-4-yl)glycerol 3-phosphate + 5-amino-1-(5-phospho-beta-D-ribosyl)imidazole-4-carboxamide + L-glutamate + H(+). The catalysed reaction is L-glutamine + H2O = L-glutamate + NH4(+). It participates in amino-acid biosynthesis; L-histidine biosynthesis; L-histidine from 5-phospho-alpha-D-ribose 1-diphosphate: step 5/9. In terms of biological role, IGPS catalyzes the conversion of PRFAR and glutamine to IGP, AICAR and glutamate. The HisH subunit catalyzes the hydrolysis of glutamine to glutamate and ammonia as part of the synthesis of IGP and AICAR. The resulting ammonia molecule is channeled to the active site of HisF. The sequence is that of Imidazole glycerol phosphate synthase subunit HisH from Natronomonas pharaonis (strain ATCC 35678 / DSM 2160 / CIP 103997 / JCM 8858 / NBRC 14720 / NCIMB 2260 / Gabara) (Halobacterium pharaonis).